A 1152-amino-acid polypeptide reads, in one-letter code: Alpha-mannosidase 2x (1152 aa).

At 1 to 5 (MKLKK) the chain is on the cytoplasmic side. The helical; Signal-anchor for type II membrane protein transmembrane segment at 6–26 (QVTVCGAAIFCVAVFSLYLML) threads the bilayer. Residues 27-796 (DRVQHDPARH…VDEEQEQQME (770 aa)) lie on the Lumenal side of the membrane. Residues 43–74 (PRSQISVLQNRIEQLEQLLEENHDIISRIKDS) are a coiled coil. Positions 175 and 177 each coordinate Zn(2+). Residue N225 is glycosylated (N-linked (GlcNAc...) asparagine). Residue D289 participates in Zn(2+) binding. D289 functions as the Nucleophile in the catalytic mechanism. N305 is a glycosylation site (N-linked (GlcNAc...) asparagine). Residue H569 coordinates Zn(2+).

Belongs to the glycosyl hydrolase 38 family. Homodimer; disulfide-linked. Interacts with MGAT4D. It depends on Zn(2+) as a cofactor.

It localises to the golgi apparatus membrane. The catalysed reaction is N(4)-{beta-D-GlcNAc-(1-&gt;2)-alpha-D-Man-(1-&gt;3)-[alpha-D-Man-(1-&gt;3)-[alpha-D-Man-(1-&gt;6)]-alpha-D-Man-(1-&gt;6)]-beta-D-Man-(1-&gt;4)-beta-D-GlcNAc-(1-&gt;4)-beta-D-GlcNAc}-L-asparaginyl-[protein] + 2 H2O = 2 alpha-D-mannopyranose + an N(4)-{beta-D-GlcNAc-(1-&gt;2)-alpha-D-Man-(1-&gt;3)-[alpha-D-Man-(1-&gt;6)]-beta-D-Man-(1-&gt;4)-beta-D-GlcNAc-(1-&gt;4)-beta-D-GlcNAc}-L-asparaginyl-[protein]. It participates in protein modification; protein glycosylation. Functionally, catalyzes the first committed step in the biosynthesis of complex N-glycans. It controls conversion of high mannose to complex N-glycans; the final hydrolytic step in the N-glycan maturation pathway. The protein is Alpha-mannosidase 2x (Man2a2) of Mus musculus (Mouse).